Here is an 86-residue protein sequence, read N- to C-terminus: MeuNaTxbeta-1 (86 aa).

Positions 1 to 20 are cleaved as a signal peptide; sequence MMKIIIFLIVSSLVLIGVKT. Residues 21 to 83 enclose the LCN-type CS-alpha/beta domain; sequence DNGYLLDKYT…LWHYETNKCN (63 aa). 4 disulfide bridges follow: Cys32–Cys82, Cys36–Cys57, Cys43–Cys64, and Cys47–Cys66.

Expressed by the venom gland.

The protein localises to the secreted. Functionally, inhibits sodium channels (Nav). Also moderately inhibits human calcium-activated potassium channel KCa1.1/KCNMA1/BK (41.9% decrease at 2 uM toxin concentration). Shows moderate antimicrobial activity against both Gram-positive and -negative bacteria. The chain is MeuNaTxbeta-1 from Mesobuthus eupeus (Lesser Asian scorpion).